The sequence spans 455 residues: Protein png1 (455 aa).

The tract at residues 1–110 (MTDGRQQHTR…LPVFPSPPRD (110 aa)) is disordered. A compositionally biased stretch (low complexity) spans 38 to 53 (SLQEQSRSRSRTQSPS). Over residues 59–73 (HTPPHPSRAPPPPPT) the composition is skewed to pro residues. Over residues 74–98 (GAHYPSSQSPSQQHQQHQLPASSSL) the composition is skewed to low complexity. 4 residues coordinate Zn(2+): Cys199, Cys202, Cys231, and Cys236. A disordered region spans residues 408–455 (NLIPREQTSGRPGEQKTPASMQDTPVDWVAAQQMGPGQSGPDRSQDGR).

The protein belongs to the transglutaminase-like superfamily. PNGase family.

This chain is Protein png1 (png1), found in Aspergillus fumigatus (strain ATCC MYA-4609 / CBS 101355 / FGSC A1100 / Af293) (Neosartorya fumigata).